A 402-amino-acid chain; its full sequence is B box and SPRY domain-containing protein (402 aa).

The interval 1 to 20 (MSAEGAEPGPGSGSGPGPGP) is disordered. A B box-type zinc finger spans residues 17 to 65 (GPGPLCPEHGQALSWFCGSERRPVCAACAGLGGRCRGHRIRRAEERAEE). A B30.2/SPRY domain is found at 212–402 (PLLTQLWATA…VADQTISIVR (191 aa)).

In terms of assembly, interacts with TRPV5 and TRPV6. Interacts with YWHAZ/14-3-3 protein zeta.

Its subcellular location is the cytoplasm. It localises to the membrane. Its function is as follows. May regulate epithelial calcium transport by inhibiting TRPV5 activity. This is B box and SPRY domain-containing protein (BSPRY) from Homo sapiens (Human).